Here is a 212-residue protein sequence, read N- to C-terminus: RING-H2 finger protein ATL68 (212 aa).

The helical transmembrane segment at 24–44 threads the bilayer; it reads LGLGYSIAIALGFLVLISTII. The RING-type; atypical zinc-finger motif lies at 136–178; that stretch reads CSICLCEYMEEEMLRMMPECKHYFHVYCLDAWLKLNGSCPVCR. The segment at 182 to 212 is disordered; sequence LPTPQSTPQSTPLSEVVPLSQYAADRRRSRR. Positions 185 to 195 are enriched in low complexity; sequence PQSTPQSTPLS.

This sequence belongs to the RING-type zinc finger family. ATL subfamily.

The protein localises to the membrane. It carries out the reaction S-ubiquitinyl-[E2 ubiquitin-conjugating enzyme]-L-cysteine + [acceptor protein]-L-lysine = [E2 ubiquitin-conjugating enzyme]-L-cysteine + N(6)-ubiquitinyl-[acceptor protein]-L-lysine.. It functions in the pathway protein modification; protein ubiquitination. This is RING-H2 finger protein ATL68 (ATL68) from Arabidopsis thaliana (Mouse-ear cress).